A 245-amino-acid polypeptide reads, in one-letter code: Eukaryotic translation initiation factor 6 (245 aa).

This sequence belongs to the eIF-6 family. As to quaternary structure, monomer. Associates with the 60S ribosomal subunit.

The protein resides in the cytoplasm. The protein localises to the nucleus. Its subcellular location is the nucleolus. Functionally, binds to the 60S ribosomal subunit and prevents its association with the 40S ribosomal subunit to form the 80S initiation complex in the cytoplasm. May also be involved in ribosome biogenesis. The sequence is that of Eukaryotic translation initiation factor 6 from Tetrahymena thermophila (strain SB210).